The sequence spans 774 residues: Ion-translocating oxidoreductase complex subunit C (774 aa).

2 4Fe-4S ferredoxin-type domains span residues 369-397 (GEPQ…QQLY) and 407-436 (KATT…VQYF). [4Fe-4S] cluster contacts are provided by cysteine 377, cysteine 380, cysteine 383, cysteine 387, cysteine 416, cysteine 419, cysteine 422, and cysteine 426. Residues 602–750 (KLEQQQANAE…EPEEQIDPRK (149 aa)) form a disordered region.

This sequence belongs to the 4Fe4S bacterial-type ferredoxin family. RnfC subfamily. In terms of assembly, the complex is composed of six subunits: RsxA, RsxB, RsxC, RsxD, RsxE and RsxG. Requires [4Fe-4S] cluster as cofactor.

Its subcellular location is the cell inner membrane. Its function is as follows. Part of a membrane-bound complex that couples electron transfer with translocation of ions across the membrane. Required to maintain the reduced state of SoxR. The polypeptide is Ion-translocating oxidoreductase complex subunit C (Escherichia coli O6:K15:H31 (strain 536 / UPEC)).